Reading from the N-terminus, the 353-residue chain is Replication-associated protein (353 aa).

Residues 8–116 (RVQSKNYFLT…DGVTIEWGQF (109 aa)) form the CRESS-DNA virus Rep endonuclease domain. The short motif at 15–18 (FLTY) is the RCR-1 element. Residues E49, H57, and H59 each coordinate a divalent metal cation. The RCR-2 signature appears at 57–59 (HLH). Y103 functions as the For DNA cleavage activity in the catalytic mechanism. The RCR-3 signature appears at 103-106 (YIDK). D107 contacts a divalent metal cation. Positions 143 to 153 (IESALTILKEE) are binding to RBR1. Residues 156 to 176 (KDYVLQNHNIRSNLERIFFKV) are oligomerization. Residue 222-229 (GDSRTGKT) coordinates ATP.

It belongs to the geminiviridae Rep protein family. In terms of assembly, homooligomer. Interacts with the replication enhancer protein (REn). Interacts with host retinoblastoma-related protein 1 (RBR1), and may thereby induce the transcription of host replicative enzymes even if the cell is not dividing anymore. Interacts with host PCNA. Interacts with host SCE1 protein. It depends on Mg(2+) as a cofactor. Mn(2+) is required as a cofactor.

Its subcellular location is the host nucleus. Essential for the replication of viral ssDNA. The closed circular ssDNA genome is first converted to a superhelical dsDNA. Rep binds a specific region at the genome origin of replication. It introduces an endonucleolytic nick within the conserved sequence 5'-TAATATTAC-3' in the intergenic region of the genome present in all geminiviruses, thereby initiating the rolling circle replication (RCR). Following cleavage, binds covalently to the 5'-phosphate of DNA as a tyrosyl ester. The cleavage gives rise to a free 3'-OH that serves as a primer for the cellular DNA polymerase. The polymerase synthesizes the (+) strand DNA by rolling circle mechanism. After one round of replication, a Rep-catalyzed nucleotidyl transfer reaction releases a circular single-stranded virus genome, thereby terminating the replication. Displays origin-specific DNA cleavage, nucleotidyl transferase, ATPase and helicase activities. In Macroptilium lathyroides (Lima bean), this protein is Replication-associated protein.